The following is a 550-amino-acid chain: Arginine--tRNA ligase (550 aa).

A 'HIGH' region motif is present at residues 130–140 (ANPTGPIHIGG).

Belongs to the class-I aminoacyl-tRNA synthetase family. Monomer.

Its subcellular location is the cytoplasm. It catalyses the reaction tRNA(Arg) + L-arginine + ATP = L-arginyl-tRNA(Arg) + AMP + diphosphate. The sequence is that of Arginine--tRNA ligase (argS) from Mycolicibacterium smegmatis (strain ATCC 700084 / mc(2)155) (Mycobacterium smegmatis).